A 196-amino-acid chain; its full sequence is MSERKRELAEEASSTSFSPLKKTKLNDSSDSSPDSHDVIVFAVSSSSVASSAALASDECSVTIGGEESDQSSSISSGCFTSESKEIAKNSSSFGVDLEDHQIETETETSTFITSNFRKETSPVSEGLGETTTEMESSSATKRKQPGVRKTPTAAEIEDLFSELESQDDKKKQFIEKYNFDIVNDEPLEGRYKWDRL.

Disordered stretches follow at residues 1-36 and 55-151; these read MSER…PDSH and ASDE…RKTP. The span at 124–139 shows a compositional bias: low complexity; it reads SEGLGETTTEMESSSA. Position 152 is a phosphothreonine; by KIN10 (T152).

This sequence belongs to the CDI family. ICK/KRP subfamily. As to quaternary structure, specifically interacts with CDKA-1, but not with CDKB1-1. Interacts with CYCD1-1, CYCD4-1 and RHF1A. Binds to FBL17. Interacts with KIN10. Interacts with CYCD3-1. In terms of processing, ubiquitinated by RHF1A and SCF(FBL17). Ubiquitination leads to its subsequent degradation, thus controlling cell cycle progression. The phosphorylation at Thr-152 by KIN10 represses its activity. As to expression, expressed in newly formed organs such as the shoot apex. Expressed in cotyledon, primary root and marginal region of the leaves as well as in developing pollen.

The protein resides in the nucleus. The protein localises to the nucleoplasm. With respect to regulation, down-regulated by KIN10 under a phosphorylation-dependent manner. In terms of biological role, binds and inhibits CYCD2-1/CDKA-1 complex kinase activity. Regulates cell division which is crucial for plant growth, development and morphogenesis. May inhibit CDK kinases specifically involved in the G1/S phase transition. The sequence is that of Cyclin-dependent kinase inhibitor 6 (KRP6) from Arabidopsis thaliana (Mouse-ear cress).